A 333-amino-acid chain; its full sequence is Gap junction alpha-4 protein (333 aa).

Over 1-20 the chain is Cytoplasmic; it reads MGDWGFLEKLLDQVQEHSTV. The helical transmembrane segment at 21–40 threads the bilayer; sequence VGKIWLTVLFIFRILILGLA. The Extracellular segment spans residues 41 to 76; that stretch reads GESVWGDEQSDFECNTAQPGCTNVCYDQAFPISHIR. The helical transmembrane segment at 77-99 threads the bilayer; it reads YWVLQFLFVSTPTLVYLGHVIYL. The Cytoplasmic portion of the chain corresponds to 100-148; sequence SRREERLRQKEGELRALPAKDPRVERALASIERQMAKISVAEDGHLRIR. The chain crosses the membrane as a helical span at residues 149–165; the sequence is GALMGTYVASVLCKSVL. Topologically, residues 166 to 207 are extracellular; sequence EAGFLYGQWRLYGWTMEPVFVCQRSPCPYLVDCFVSRPTEKT. The helical transmembrane segment at 208-230 threads the bilayer; it reads IFIIFMLVVGLISLVLNLLELAY. At 231–333 the chain is on the cytoplasmic side; sequence LLCRCLSRGV…SSSASKKQYV (103 aa). Residues 303–333 form a disordered region; the sequence is SRAPLFLDPPPQTGRKSPSRPSSSASKKQYV. Residues 317-333 are compositionally biased toward low complexity; sequence RKSPSRPSSSASKKQYV.

This sequence belongs to the connexin family. Alpha-type (group II) subfamily. In terms of assembly, a connexon is composed of a hexamer of connexins.

It localises to the cell membrane. The protein resides in the cell junction. Its subcellular location is the gap junction. One gap junction consists of a cluster of closely packed pairs of transmembrane channels, the connexons, through which materials of low MW diffuse from one cell to a neighboring cell. In Bos taurus (Bovine), this protein is Gap junction alpha-4 protein (GJA4).